We begin with the raw amino-acid sequence, 279 residues long: Plasmodesmata-located protein 8 (279 aa).

A signal peptide spans 1-20; the sequence is MRRLFLFSLLFLFFYSSSSS. The Extracellular portion of the chain corresponds to 21 to 253; it reads RSSSESHIFI…PTNGDHVGKS (233 aa). 2 Gnk2-homologous domains span residues 27–135 and 137–237; these read HIFI…TNDF and GKPD…GSGY. Cystine bridges form between C34–C113, C89–C98, C101–C126, C148–C215, C191–C200, and C203–C228. A helical transmembrane segment spans residues 254-274; that stretch reads IAIIVGVIAGFAILVVLLSLC. Residues 254–274 are necessary and sufficient for plasmodesmal targeting; sequence IAIIVGVIAGFAILVVLLSLC. Over 275–279 the chain is Cytoplasmic; sequence RNSMH.

It belongs to the cysteine-rich repeat secretory protein family. Plasmodesmata-located proteins (PDLD) subfamily. As to quaternary structure, interacts with ACBP6; interaction occurs at the plasma membrane. In terms of assembly, (Microbial infection) Interacts with Grapevine fanleaf virus (GFLV) 2B-MP. Highly expressed in pollen, lateral root and elongation zone. Higher expression in the reproductive tissues (flowers and buds) than in vegetative organs (leaves and stems). High expression in shoot and root phloem companion cells (at protein level).

It localises to the cell membrane. The protein resides in the cell junction. Its subcellular location is the plasmodesma. Functionally, modulates cell-to-cell trafficking. The chain is Plasmodesmata-located protein 8 from Arabidopsis thaliana (Mouse-ear cress).